The chain runs to 405 residues: LanC-like protein GCL2 (405 aa).

3 residues coordinate Zn(2+): cysteine 278, cysteine 323, and histidine 324.

The protein belongs to the LanC-like protein family.

Its function is as follows. May play a role in signaling. May be not involved in abscisic acid (ABA) signaling. The chain is LanC-like protein GCL2 (GCL2) from Arabidopsis thaliana (Mouse-ear cress).